The chain runs to 372 residues: 3-dehydroquinate synthase (372 aa).

NAD(+)-binding positions include Gly-116–Asp-120, Thr-140–Thr-141, Lys-153, Lys-162, and Thr-180–Thr-183. Glu-195, His-260, and His-277 together coordinate Zn(2+).

The protein belongs to the sugar phosphate cyclases superfamily. Dehydroquinate synthase family. NAD(+) is required as a cofactor. The cofactor is Co(2+). Requires Zn(2+) as cofactor.

The protein localises to the cytoplasm. The enzyme catalyses 7-phospho-2-dehydro-3-deoxy-D-arabino-heptonate = 3-dehydroquinate + phosphate. It participates in metabolic intermediate biosynthesis; chorismate biosynthesis; chorismate from D-erythrose 4-phosphate and phosphoenolpyruvate: step 2/7. Catalyzes the conversion of 3-deoxy-D-arabino-heptulosonate 7-phosphate (DAHP) to dehydroquinate (DHQ). The protein is 3-dehydroquinate synthase of Prochlorococcus marinus (strain MIT 9313).